Consider the following 67-residue polypeptide: Large ribosomal subunit protein bL35 (67 aa).

Belongs to the bacterial ribosomal protein bL35 family.

The protein is Large ribosomal subunit protein bL35 of Novosphingobium aromaticivorans (strain ATCC 700278 / DSM 12444 / CCUG 56034 / CIP 105152 / NBRC 16084 / F199).